A 119-amino-acid chain; its full sequence is Probable non-functional T cell receptor gamma variable 11 (119 aa).

The N-terminal stretch at M1–G18 is a signal peptide. One can recognise an Ig-like domain in the interval P23–H119. The N-linked (GlcNAc...) asparagine glycan is linked to N32.

In terms of assembly, most probably, the gamma-delta TR is not assembled due to incorrect folding of the gamma chain. Gamma-delta TR is a heterodimer composed of a gamma and delta chain; disulfide-linked. The gamma-delta TR is associated with the transmembrane signaling CD3 coreceptor proteins following the stoichiometry: a single gamma-delta TR heterodimer associates with one CD3D-CD3E heterodimer, one CD3G-CD3E heterodimer and one CD247 homodimer forming a stable octameric structure. Upon activation, gamma-delta TR complex associates with FCER1G to initiate intracellular signaling.

The protein resides in the cell membrane. In terms of biological role, probable non-functional open reading frame (ORF) of V region of the variable domain of T cell receptor (TR) gamma chain. Non-functional ORF generally cannot participate in the synthesis of a productive T cell receptor (TR) chain due to altered V-(D)-J or switch recombination and/or splicing site (at mRNA level) and/or conserved amino acid change (protein level). Gamma-delta TRs recognize a variety of self and foreign non-peptide antigens frequently expressed at the epithelial boundaries between the host and external environment, including endogenous lipids presented by MH-like protein CD1D and phosphoantigens presented by butyrophilin-like molecule BTN3A1. Upon antigen recognition induces rapid, innate-like immune responses involved in pathogen clearance and tissue repair. Binding of gamma-delta TR complex to antigen triggers phosphorylation of immunoreceptor tyrosine-based activation motifs (ITAMs) in the CD3 chains by the LCK and FYN kinases, allowing the recruitment, phosphorylation, and activation of ZAP70 that facilitates phosphorylation of the scaffolding proteins LCP2 and LAT. This lead to the formation of a supramolecular signalosome that recruits the phospholipase PLCG1, resulting in calcium mobilization and ERK activation, ultimately leading to T cell expansion and differentiation into effector cells. Gamma-delta TRs are produced through somatic rearrangement of a limited repertoire of variable (V), diversity (D), and joining (J) genes. The potential diversity of gamma-delta TRs is conferred by the unique ability to rearrange (D) genes in tandem and to utilize all three reading frames. The combinatorial diversity is considerably increased by the sequence exonuclease trimming and random nucleotide (N) region additions which occur during the V-(D)-J rearrangements. This Homo sapiens (Human) protein is Probable non-functional T cell receptor gamma variable 11.